The chain runs to 82 residues: ATP synthase subunit c, chloroplastic (82 aa).

M1 is modified (N-formylmethionine). 2 helical membrane-spanning segments follow: residues 3–23 (PIVAATSVVSAGLAVGLAAIG) and 57–77 (FAFMESLTIYGLVVALALLFA).

Belongs to the ATPase C chain family. As to quaternary structure, F-type ATPases have 2 components, F(1) - the catalytic core - and F(0) - the membrane proton channel. F(1) has five subunits: alpha(3), beta(3), gamma(1), delta(1), epsilon(1). F(0) has four main subunits: a(1), b(1), b'(1) and c(10-14). The alpha and beta chains form an alternating ring which encloses part of the gamma chain. F(1) is attached to F(0) by a central stalk formed by the gamma and epsilon chains, while a peripheral stalk is formed by the delta, b and b' chains.

The protein localises to the plastid. The protein resides in the chloroplast thylakoid membrane. F(1)F(0) ATP synthase produces ATP from ADP in the presence of a proton or sodium gradient. F-type ATPases consist of two structural domains, F(1) containing the extramembraneous catalytic core and F(0) containing the membrane proton channel, linked together by a central stalk and a peripheral stalk. During catalysis, ATP synthesis in the catalytic domain of F(1) is coupled via a rotary mechanism of the central stalk subunits to proton translocation. Functionally, key component of the F(0) channel; it plays a direct role in translocation across the membrane. A homomeric c-ring of between 10-14 subunits forms the central stalk rotor element with the F(1) delta and epsilon subunits. In Chlamydomonas reinhardtii (Chlamydomonas smithii), this protein is ATP synthase subunit c, chloroplastic.